A 196-amino-acid polypeptide reads, in one-letter code: Interleukin-23 subunit alpha (196 aa).

The signal sequence occupies residues 1 to 21 (MLDCRAVIMLWLLPWVTQGLA).

Belongs to the IL-6 superfamily. In terms of assembly, heterodimer with IL12B; disulfide-linked. The heterodimer is known as interleukin IL-23. Interacts with IL23R; this interaction enables recruitment of IL12RB1. Secreted by activated dendritic cells (at protein level). Detected in various tissues with higher expression in polarized Th1 cells and activated macrophages.

Its subcellular location is the secreted. Functionally, associates with IL12B to form the IL-23 interleukin, a heterodimeric cytokine which functions in innate and adaptive immunity. IL-23 may constitute with IL-17 an acute response to infection in peripheral tissues. IL-23 binds to a heterodimeric receptor complex composed of IL12RB1 and IL23R, activates the Jak-Stat signaling cascade, stimulates memory rather than naive T-cells and promotes production of pro-inflammatory cytokines. IL-23 induces autoimmune inflammation and thus may be responsible for autoimmune inflammatory diseases and may be important for tumorigenesis. Its function is as follows. Associates with IL12B to form the pro-inflammatory cytokine IL-23 that plays different roles in innate and adaptive immunity. Released by antigen-presenting cells such as dendritic cells or macrophages, binds to a heterodimeric receptor complex composed of IL12RB1 and IL23R to activate JAK2 and TYK2 which then phosphorylate the receptor to form a docking site leading to the phosphorylation of STAT3 and STAT4. This process leads to activation of several pathways including p38 MAPK or NF-kappa-B and promotes the production of pro-inflammatory cytokines such as interleukin-17A/IL17A. In turn, participates in the early and effective intracellular bacterial clearance. Promotes the expansion and survival of T-helper 17 cells, a CD4-positive helper T-cell subset that produces IL-17, as well as other IL-17-producing cells. This chain is Interleukin-23 subunit alpha (Il23a), found in Mus musculus (Mouse).